Consider the following 571-residue polypeptide: UvrABC system protein C (571 aa).

Positions 15–93 (TSPGVYLWKD…VDRFNPEFNI (79 aa)) constitute a GIY-YIG domain. Residues 184–219 (NNYLNELTNKMHTAANNMQFELALFLRDGLTYLKKL) form the UVR domain.

The protein belongs to the UvrC family. In terms of assembly, interacts with UvrB in an incision complex.

It is found in the cytoplasm. In terms of biological role, the UvrABC repair system catalyzes the recognition and processing of DNA lesions. UvrC both incises the 5' and 3' sides of the lesion. The N-terminal half is responsible for the 3' incision and the C-terminal half is responsible for the 5' incision. In Mycoplasmopsis agalactiae (strain NCTC 10123 / CIP 59.7 / PG2) (Mycoplasma agalactiae), this protein is UvrABC system protein C.